The primary structure comprises 536 residues: MASSALNNLVAVNPNTLSPSPKSTPLPNTFSNLRRVSAFRPIKASLFGDSPIKIPGITSQPPPSSDETTLPIRQIPGDYGLPGIGPIQDRLDYFYNQGREEFFKSRLQKYKSTVYRANMPPGPFIASNPRVIVLLDAKSFPVLFDMSKVEKKDLFTGTYMPSTELTGGYRILSYLDPSEPNHTKLKQLLFNLIKNRRDYVIPEFSSSFTDLCEVVEYDLATKGKAAFNDPAEQAAFNFLSRAFFGVKPIDTPLGKDAPSLISKWVLFNLAPILSVGLPKEVEEATLHSVRLPPLLVQNDYHRLYEFFTSAAGSVLDEAEQSGISRDEACHNILFAVCFNSWGGFKILFPSLMKWIGRAGLELHTKLAQEIRSAIQSTGGGKVTMAAMEQMPLMKSVVYETLRIEPPVALQYGKAKKDFILESHEAAYQVKEGEMLFGYQPFATKDPKIFDRPEEFVADRFVGEGVKLMEYVMWSNGPETETPSVANKQCAGKDFVVMAARLFVVELFKRYDSFDIEVGTSSLGASITLTSLKRSTF.

Residues 1 to 58 (MASSALNNLVAVNPNTLSPSPKSTPLPNTFSNLRRVSAFRPIKASLFGDSPIKIPGIT) constitute a chloroplast transit peptide. The heme b site is built by lysine 151, histidine 182, and lysine 186. 3 residues coordinate (13S)-hydroperoxy-(9Z,11E)-octadecadienoate: serine 262, asparagine 339, and lysine 345. A (13S)-hydroperoxy-(9Z,11E,15Z)-octadecatrienoate-binding site is contributed by asparagine 339. Positions 487 and 489 each coordinate heme b.

This sequence belongs to the cytochrome P450 family. Requires heme b as cofactor.

It localises to the plastid. It is found in the chloroplast. It carries out the reaction (13S)-hydroperoxy-(9Z,11E,15Z)-octadecatrienoate = (9Z,13S,15Z)-12,13-epoxyoctadeca-9,11,15-trienoate + H2O. It catalyses the reaction (13S)-hydroperoxy-(9Z,11E)-octadecadienoate = (9Z,13S)-12,13-epoxyoctadeca-9,11-dienoate + H2O. The protein operates within lipid metabolism; oxylipin biosynthesis. Its function is as follows. Cytochrome P450 enzyme involved in the biosynthesis of oxylipin jasmonates, important phytohormones acting as growth regulators and signaling molecules for plant defense. Functions as an allene oxide synthase that converts hydroperoxy fatty acids to unstable allene epoxides. Catalyzes the dehydration of 13-HPOTE ((13S)-hydroperoxy-(9Z,11E,15Z)-octadecatrienoate), as well as 13-HPODE ((13S)-hydroperoxy-(9Z,11E)-octadecadienoate). The sequence is that of Allene oxide synthase, chloroplastic (CYP74A) from Linum usitatissimum (Flax).